The following is a 314-amino-acid chain: MKKLKIVFAGTEYFSAEHLHALITSSHDVISVITQPDRYSGRGQKITFSPVKILSLNNGIPIFQPENLNDTDFQNKLLKLNADIMTVVSYGKIIPKKILNMFSKGCINVHASLLPRWRGATPIQSSILHGDKKTGISIIQMNDEIDSGNIMHSITCSISSKDTTKTLSLKLIKIGIEALLEVLEKIILNTVIYKKQNEKNVILSKKIYKKDALLDWNLSAEKLERLIRAFNPWPICYFLSQNKNIKVWQSEVIPITQNNRSVGEIISYNKNGIQINTSHQILNIKKLQFPGKKIIDVKNVIISKKKLFKIGTIL.

Position 112 to 115 (112 to 115 (SLLP)) interacts with (6S)-5,6,7,8-tetrahydrofolate.

It belongs to the Fmt family.

The enzyme catalyses L-methionyl-tRNA(fMet) + (6R)-10-formyltetrahydrofolate = N-formyl-L-methionyl-tRNA(fMet) + (6S)-5,6,7,8-tetrahydrofolate + H(+). In terms of biological role, attaches a formyl group to the free amino group of methionyl-tRNA(fMet). The formyl group appears to play a dual role in the initiator identity of N-formylmethionyl-tRNA by promoting its recognition by IF2 and preventing the misappropriation of this tRNA by the elongation apparatus. This chain is Methionyl-tRNA formyltransferase, found in Buchnera aphidicola subsp. Acyrthosiphon pisum (strain 5A).